A 325-amino-acid polypeptide reads, in one-letter code: Transaldolase (325 aa).

The active-site Schiff-base intermediate with substrate is the Lys125.

This sequence belongs to the transaldolase family. Type 2 subfamily.

It localises to the cytoplasm. The catalysed reaction is D-sedoheptulose 7-phosphate + D-glyceraldehyde 3-phosphate = D-erythrose 4-phosphate + beta-D-fructose 6-phosphate. It participates in carbohydrate degradation; pentose phosphate pathway; D-glyceraldehyde 3-phosphate and beta-D-fructose 6-phosphate from D-ribose 5-phosphate and D-xylulose 5-phosphate (non-oxidative stage): step 2/3. Its function is as follows. Transaldolase is important for the balance of metabolites in the pentose-phosphate pathway. This is Transaldolase from Campylobacter jejuni subsp. doylei (strain ATCC BAA-1458 / RM4099 / 269.97).